Reading from the N-terminus, the 129-residue chain is Small ribosomal subunit protein bS6 (129 aa).

This sequence belongs to the bacterial ribosomal protein bS6 family.

Functionally, binds together with bS18 to 16S ribosomal RNA. This is Small ribosomal subunit protein bS6 from Pelobacter propionicus (strain DSM 2379 / NBRC 103807 / OttBd1).